The sequence spans 326 residues: Pyruvate dehydrogenase E1 component subunit beta (326 aa).

E59 lines the thiamine diphosphate pocket.

Heterodimer of an alpha and a beta chain. It depends on thiamine diphosphate as a cofactor.

The catalysed reaction is N(6)-[(R)-lipoyl]-L-lysyl-[protein] + pyruvate + H(+) = N(6)-[(R)-S(8)-acetyldihydrolipoyl]-L-lysyl-[protein] + CO2. Its function is as follows. The pyruvate dehydrogenase complex catalyzes the overall conversion of pyruvate to acetyl-CoA and CO(2). It contains multiple copies of three enzymatic components: pyruvate dehydrogenase (E1), dihydrolipoamide acetyltransferase (E2) and lipoamide dehydrogenase (E3). This is Pyruvate dehydrogenase E1 component subunit beta (pdhB) from Rickettsia felis (strain ATCC VR-1525 / URRWXCal2) (Rickettsia azadi).